The sequence spans 702 residues: DnaJ homolog subfamily C member 14 (702 aa).

Disordered regions lie at residues 1 to 148 (MAQK…GGNG) and 165 to 229 (DELE…KRSQ). Pro residues predominate over residues 75 to 84 (HGPPGGPGPP). Over residues 88-103 (EDPDQSETSSEEESGV) the composition is skewed to acidic residues. Positions 113 to 133 (TGNQKDGNSFLSIPSACNCQG) are enriched in polar residues. Acidic residues predominate over residues 165–175 (DELEEEYDDEE). Residues 192-201 (PPSRRQRHRF) show a composition bias toward basic residues. Residues 202-217 (PTKEDTREGGRRDPRS) show a composition bias toward basic and acidic residues. The segment covering 218–227 (PGRHRLGRKR) has biased composition (basic residues). Transmembrane regions (helical) follow at residues 250 to 270 (AGFW…ETCG), 300 to 320 (GWAQ…VGLF), and 326 to 346 (LLGA…QLGW). One can recognise a J domain in the interval 443–507 (NPFHVLGVEA…EKRKEYEMKR (65 aa)). Residues 658–702 (MPNGNFFAAPQPAPGAAAASKPNSTVPKGEAKPKRRKKVRRPFQR) form a disordered region. Over residues 659 to 676 (PNGNFFAAPQPAPGAAAA) the composition is skewed to low complexity. The span at 690–702 (PKRRKKVRRPFQR) shows a compositional bias: basic residues.

Interacts with the FxxxFxxxF motif of DRD1 via its C-terminal domain. In terms of tissue distribution, highly expressed in pancreas and selectively expressed in brain, lung, liver, skeletal muscle and kidney.

It localises to the endoplasmic reticulum membrane. In terms of biological role, regulates the export of target proteins, such as DRD1, from the endoplasmic reticulum to the cell surface. This is DnaJ homolog subfamily C member 14 (DNAJC14) from Homo sapiens (Human).